Here is a 415-residue protein sequence, read N- to C-terminus: MGQPANRSVFLLAPNGSHAPDQGDSQERSEAWVVGMGIVMSLIVLAIVFGNVLVITAIARFERLQTVTNYFITSLACADLVMGLAVVPFGASHILMKMWTFGNFWCEFWTSIDVLCVTASIETLCVIAVDRYFAITSPFKYQSLLTKNKARVVILMVWIVSGLTSFLPIQMHWYRATHQEAINCYAKETCCDFFTNQAYAIASSIVSFYLPLVVMVFVYSRVFQVAQRQLQKIDRSEGRFHAQNLSQVEQDGRSGHGHRRSSKFCLKEHKALKTLGIIMGTFTLCWLPFFIVNIVHVIQDNLIPKEVYILLNWVGYVNSAFNPLIYCRSPDFRIAFQELLCLRRSSLKAYGNGYSNNSNSRSDYAGEHSGCHLGQEKDSELLCEDPPGTEDRQGTVPSDSVDSQGRNCSTNDSLL.

Over 1 to 34 (MGQPANRSVFLLAPNGSHAPDQGDSQERSEAWVV) the chain is Extracellular. N-linked (GlcNAc...) asparagine glycosylation is found at Asn-6 and Asn-15. The chain crosses the membrane as a helical span at residues 35 to 58 (GMGIVMSLIVLAIVFGNVLVITAI). The Cytoplasmic portion of the chain corresponds to 59 to 71 (ARFERLQTVTNYF). Residues 72–95 (ITSLACADLVMGLAVVPFGASHIL) form a helical membrane-spanning segment. The Extracellular segment spans residues 96 to 106 (MKMWTFGNFWC). 2 disulfides stabilise this stretch: Cys-106–Cys-191 and Cys-184–Cys-190. A helical membrane pass occupies residues 107–129 (EFWTSIDVLCVTASIETLCVIAV). Residues 130 to 150 (DRYFAITSPFKYQSLLTKNKA) are Cytoplasmic-facing. The residue at position 141 (Tyr-141) is a Phosphotyrosine. The chain crosses the membrane as a helical span at residues 151–174 (RVVILMVWIVSGLTSFLPIQMHWY). Residues 175–196 (RATHQEAINCYAKETCCDFFTN) lie on the Extracellular side of the membrane. A helical transmembrane segment spans residues 197-220 (QAYAIASSIVSFYLPLVVMVFVYS). The Cytoplasmic portion of the chain corresponds to 221–274 (RVFQVAQRQLQKIDRSEGRFHAQNLSQVEQDGRSGHGHRRSSKFCLKEHKALKT). Ser-246 carries the phosphoserine modification. 2 positions are modified to phosphoserine; by PKA: Ser-261 and Ser-262. Residue Cys-265 is the site of S-palmitoyl cysteine attachment. The helical transmembrane segment at 275 to 298 (LGIIMGTFTLCWLPFFIVNIVHVI) threads the bilayer. Residues 299–305 (QDNLIPK) are Extracellular-facing. The chain crosses the membrane as a helical span at residues 306–329 (EVYILLNWVGYVNSAFNPLIYCRS). Topologically, residues 330–415 (PDFRIAFQEL…RNCSTNDSLL (86 aa)) are cytoplasmic. A lipid anchor (S-palmitoyl cysteine) is attached at Cys-341. Ser-345 and Ser-346 each carry phosphoserine; by PKA. Ser-355 is subject to Phosphoserine; by BARK. The disordered stretch occupies residues 379–415 (SELLCEDPPGTEDRQGTVPSDSVDSQGRNCSTNDSLL). 4-hydroxyproline occurs at positions 387 and 397. Residues 395–415 (TVPSDSVDSQGRNCSTNDSLL) show a composition bias toward polar residues. The PDZ-binding motif lies at 412–415 (DSLL).

The protein belongs to the G-protein coupled receptor 1 family. Adrenergic receptor subfamily. ADRB2 sub-subfamily. As to quaternary structure, binds NHERF1 and GPRASP1. Interacts with ARRB1 and ARRB2. Interacts with SRC. Interacts with USP20 and USP33. Interacts with VHL; the interaction, which is increased on hydroxylation of ADRB2, ubiquitinates ADRB2 leading to its degradation. Interacts with EGLN3; the interaction hydroxylates ADRB2 facilitating VHL-E3 ligase-mediated ubiquitination. Interacts (via PDZ-binding motif) with SNX27 (via PDZ domain); the interaction is required when endocytosed to prevent degradation in lysosomes and promote recycling to the plasma membrane. Interacts with CNIH4. Interacts with ARRDC3. Interacts with NEDD4. Interacts with MARCHF2. Post-translationally, palmitoylated; may reduce accessibility of Ser-345 and Ser-346 by anchoring Cys-341 to the plasma membrane. Agonist stimulation promotes depalmitoylation and further allows Ser-345 and Ser-346 phosphorylation. In terms of processing, phosphorylated by PKA and BARK upon agonist stimulation, which mediates homologous desensitization of the receptor. PKA-mediated phosphorylation seems to facilitate phosphorylation by BARK. Phosphorylation of Tyr-141 is induced by insulin and leads to supersensitization of the receptor. Post-translationally, polyubiquitinated. Agonist-induced ubiquitination leads to sort internalized receptors to the lysosomes for degradation. Deubiquitination by USP20 and USP33, leads to ADRB2 recycling and resensitization after prolonged agonist stimulation. USP20 and USP33 are constitutively associated and are dissociated immediately after agonist stimulation. Ubiquitination by the VHL-E3 ligase complex is oxygen-dependent. In terms of processing, hydroxylation by EGLN3 occurs only under normoxia and increases the interaction with VHL and the subsequent ubiquitination and degradation of ADRB2. Palmitoylated. Mainly palmitoylated at Cys-341. Palmitoylation may reduce accessibility of phosphorylation sites by anchoring the receptor to the plasma membrane. Agonist stimulation promotes depalmitoylation and further allows Ser-345 and Ser-346 phosphorylation. Also undergoes transient, ligand-induced palmitoylation at Cys-265 probably by ZDHHC9, ZDHHC14 and ZDHHC18 within the Golgi. Palmitoylation at Cys-265 requires phosphorylation by PKA and receptor internalization and stabilizes the receptor. Could be depalmitoylated by LYPLA1 at the plasma membrane.

It localises to the cell membrane. Its subcellular location is the early endosome. The protein localises to the golgi apparatus. Its function is as follows. Beta-adrenergic receptors mediate the catecholamine-induced activation of adenylate cyclase through the action of G proteins. The beta-2-adrenergic receptor binds epinephrine with an approximately 30-fold greater affinity than it does norepinephrine. The protein is Beta-2 adrenergic receptor (ADRB2) of Canis lupus familiaris (Dog).